A 365-amino-acid polypeptide reads, in one-letter code: Phosphate acyltransferase (365 aa).

The protein belongs to the PlsX family. In terms of assembly, homodimer. Probably interacts with PlsY.

It localises to the cytoplasm. It carries out the reaction a fatty acyl-[ACP] + phosphate = an acyl phosphate + holo-[ACP]. It participates in lipid metabolism; phospholipid metabolism. In terms of biological role, catalyzes the reversible formation of acyl-phosphate (acyl-PO(4)) from acyl-[acyl-carrier-protein] (acyl-ACP). This enzyme utilizes acyl-ACP as fatty acyl donor, but not acyl-CoA. The polypeptide is Phosphate acyltransferase (Klebsiella pneumoniae (strain 342)).